Reading from the N-terminus, the 125-residue chain is Desulfoferrodoxin (125 aa).

Fe cation-binding residues include His-49, His-69, His-75, Cys-115, and His-118.

The protein belongs to the desulfoferrodoxin family. Cu(2+) serves as cofactor.

It catalyses the reaction reduced [rubredoxin] + superoxide + 2 H(+) = oxidized [rubredoxin] + H2O2. In terms of biological role, catalyzes the reduction of superoxide to hydrogen peroxide, using electrons from NADH and NADH:rubredoxin oxidoreductase (NROR) and rubredoxin (Rd) as electron transport intermediaries between NADH and Dfx. Is a key factor in the superoxide reductase dependent part of a pathway for detoxification of reactive oxygen species (ROS) in C.acetobutylicum, an obligate anaerobic bacterium. The sequence is that of Desulfoferrodoxin (dfx) from Clostridium acetobutylicum (strain ATCC 824 / DSM 792 / JCM 1419 / IAM 19013 / LMG 5710 / NBRC 13948 / NRRL B-527 / VKM B-1787 / 2291 / W).